The primary structure comprises 303 residues: Eukaryotic translation initiation factor 3 subunit G (303 aa).

4 disordered regions span residues 1 to 32 (MAAVAKPVQAWADDDDIDDGTTERLPDPQTIV), 81 to 100 (GLSAKDGPGPASDTTSVGEN), 105 to 126 (PSANWRKDQKDESKDANANAMK), and 181 to 215 (GAAGGAGAKKGSYVPPALRGDRKEGEKMGGGAGGK). The segment covering 109–126 (WRKDQKDESKDANANAMK) has biased composition (basic and acidic residues). The RRM domain occupies 223–301 (ATLRVTNVSE…LILRVEFAKK (79 aa)).

The protein belongs to the eIF-3 subunit G family. Component of the eukaryotic translation initiation factor 3 (eIF-3) complex.

It is found in the cytoplasm. RNA-binding component of the eukaryotic translation initiation factor 3 (eIF-3) complex, which is involved in protein synthesis of a specialized repertoire of mRNAs and, together with other initiation factors, stimulates binding of mRNA and methionyl-tRNAi to the 40S ribosome. The eIF-3 complex specifically targets and initiates translation of a subset of mRNAs involved in cell proliferation. This subunit can bind 18S rRNA. The sequence is that of Eukaryotic translation initiation factor 3 subunit G from Pyricularia oryzae (strain 70-15 / ATCC MYA-4617 / FGSC 8958) (Rice blast fungus).